Here is a 695-residue protein sequence, read N- to C-terminus: NADPH--cytochrome P450 reductase (695 aa).

Topologically, residues 1-8 (MAQLDTLD) are lumenal. A helical transmembrane segment spans residues 9-31 (LVVLAVLLVGSVAYFTKGTYWAV). The Cytoplasmic segment spans residues 32 to 695 (AKDPYASTGP…SGSYQEDVWS (664 aa)). Residues 66-221 (CVIFYGSQTG…DFLAWKEPMW (156 aa)) enclose the Flavodoxin-like domain. FMN is bound by residues 72–77 (SQTGTA), 123–126 (ATYG), 169–178 (LGNNTYEHYN), and D204. The region spanning 277–538 (HNPFIAPIAE…HVRHSNFKLP (262 aa)) is the FAD-binding FR-type domain. R296 is an NADP(+) binding site. FAD is bound by residues 451-454 (RYYS), 469-471 (TAV), and 486-489 (GVTT). Residues T552, 614 to 615 (SR), 620 to 624 (KVYVQ), and E656 each bind NADP(+). An FAD-binding site is contributed by W694.

This sequence belongs to the NADPH--cytochrome P450 reductase family. In the N-terminal section; belongs to the flavodoxin family. It in the C-terminal section; belongs to the flavoprotein pyridine nucleotide cytochrome reductase family. Requires FAD as cofactor. FMN is required as a cofactor.

The protein localises to the endoplasmic reticulum membrane. Its subcellular location is the mitochondrion outer membrane. The protein resides in the cell membrane. It carries out the reaction 2 oxidized [cytochrome P450] + NADPH = 2 reduced [cytochrome P450] + NADP(+) + H(+). Functionally, this enzyme is required for electron transfer from NADP to cytochrome P450 in microsomes. It can also provide electron transfer to heme oxygenase and cytochrome B5. Involved in ergosterol biosynthesis. The sequence is that of NADPH--cytochrome P450 reductase from Aspergillus niger (strain ATCC MYA-4892 / CBS 513.88 / FGSC A1513).